Reading from the N-terminus, the 426-residue chain is Vacuole membrane protein hfl11 (426 aa).

5 consecutive transmembrane segments (helical) span residues Ser39–Tyr59, Ile73–Glu93, Gly133–Val153, Ile172–Val192, and Val223–Leu243. Ser364 carries the post-translational modification Phosphoserine. Residues Leu386–Tyr409 are ATG8-interacting region.

It belongs to the TMEM184 family. As to quaternary structure, interacts with atg8.

The protein resides in the vacuole membrane. Vacuole membrane protein that recruits ATG8 to facilitate the degradation of vacuolar integral membrane proteins during early-stationary vacuole turnover (EVT) when cells enter stationary phase. The chain is Vacuole membrane protein hfl11 from Schizosaccharomyces pombe (strain 972 / ATCC 24843) (Fission yeast).